We begin with the raw amino-acid sequence, 191 residues long: MAAYSYRPGPGGGPGPAAGAALPDQSFLWNVFQRVDKDRSGVISDNELQQALSNGTWTPFNPVTVRSIISMFDRENKAGVNFSEFTGVWKYITDWQNVFRTYDRDNSGMIDKNELKQALSGFGYRLSDQFHDILIRKFDRQGRGQIAFDDFIQGCIVLQRLTDIFRRYDTDQDGWIQVSYEQYLSMVFSIV.

Ala2 carries the N-acetylalanine modification. EF-hand domains lie at 23–58 (PDQS…GTWT), 59–89 (PFNP…TGVW), 90–125 (KYIT…FGYR), 126–161 (LSDQ…LQRL), and 162–191 (TDIF…FSIV). Ca(2+)-binding residues include Asp36, Asp38, Ser40, Val42, and Glu47. Ca(2+)-binding residues include Asp103, Asp105, Ser107, Met109, and Glu114. Positions 169, 171, 173, and 175 each coordinate Mg(2+).

Homodimer and heterodimer; heterodimerizes (via the EF-hand 5) with PEF1. Isoform 1 and isoform 2 self-associate; probably forming homodimers. Interacts with CPNE4 (via VWFA domain). Interacts with PDCD6IP; the interaction is calcium-dependent. Interacts with RBM22. Interacts with PLSCR4. Interacts with ANXA7 and TSG101. Interacts with DAPK1. Interacts with SEC31A; the interaction is calcium-dependent and promotes monoubiquitination of SEC31A. Interacts with ANXA11 (via N-terminus); the interaction is calcium-dependent. Interacts with PLSCR3 (via N-terminus); the interaction is calcium-dependent. Interacts with MCOLN1; the interaction is calcium-dependent. Interacts with KDR; the interaction is calcium-dependent. Interacts with HEBP2; the interaction is calcium-dependent. Interacts with TFG. Isoform 1: Interacts with SHISA5, leading to stabilize it. Isoform 2: Does not interact with SHISA5. Isoform 2: Does not interact with PDCD6IP, TSG101, ANXA7 and ANXA11.

The protein localises to the endoplasmic reticulum membrane. Its subcellular location is the cytoplasmic vesicle. It localises to the COPII-coated vesicle membrane. The protein resides in the cytoplasm. It is found in the nucleus. The protein localises to the endosome. Its function is as follows. Calcium sensor that plays a key role in processes such as endoplasmic reticulum (ER)-Golgi vesicular transport, endosomal biogenesis or membrane repair. Acts as an adapter that bridges unrelated proteins or stabilizes weak protein-protein complexes in response to calcium: calcium-binding triggers exposure of apolar surface, promoting interaction with different sets of proteins thanks to 3 different hydrophobic pockets, leading to translocation to membranes. Involved in ER-Golgi transport by promoting the association between PDCD6IP and TSG101, thereby bridging together the ESCRT-III and ESCRT-I complexes. Together with PEF1, acts as a calcium-dependent adapter for the BCR(KLHL12) complex, a complex involved in ER-Golgi transport by regulating the size of COPII coats. In response to cytosolic calcium increase, the heterodimer formed with PEF1 interacts with, and bridges together the BCR(KLHL12) complex and SEC31 (SEC31A or SEC31B), promoting monoubiquitination of SEC31 and subsequent collagen export, which is required for neural crest specification. Involved in the regulation of the distribution and function of MCOLN1 in the endosomal pathway. Promotes localization and polymerization of TFG at endoplasmic reticulum exit site. Required for T-cell receptor-, Fas-, and glucocorticoid-induced apoptosis. May mediate Ca(2+)-regulated signals along the death pathway: interaction with DAPK1 can accelerate apoptotic cell death by increasing caspase-3 activity. Its role in apoptosis may however be indirect, as suggested by knockout experiments. May inhibit KDR/VEGFR2-dependent angiogenesis; the function involves inhibition of VEGF-induced phosphorylation of the Akt signaling pathway. Has a lower Ca(2+) affinity than isoform 1. The chain is Programmed cell death protein 6 (Pdcd6) from Mus musculus (Mouse).